Reading from the N-terminus, the 293-residue chain is Zinc metalloproteinase nas-2 (293 aa).

An N-terminal signal peptide occupies residues 1-17; it reads MIFPLLLTLILPNFVAP. Residues 18 to 67 constitute a propeptide that is removed on maturation; sequence KVLEPEKDDEIAVSTQREKTFFDMKLILTKLPTFEPSKYGHINIPLRKKR. The Peptidase M12A domain occupies 67 to 260; that stretch reads RGIALHPLQW…ININTFYKCK (194 aa). N-linked (GlcNAc...) asparagine glycosylation is present at Asn111. Intrachain disulfides connect Cys114–Cys259 and Cys139–Cys169. Zn(2+) is bound at residue His180. Glu181 is an active-site residue. Residues His184 and His190 each contribute to the Zn(2+) site. N-linked (GlcNAc...) asparagine glycosylation is present at Asn287.

It depends on Zn(2+) as a cofactor.

It localises to the secreted. Its function is as follows. Metalloprotease. The polypeptide is Zinc metalloproteinase nas-2 (nas-2) (Caenorhabditis elegans).